Consider the following 389-residue polypeptide: 2-deoxystreptamine N-acetyl-D-glucosaminyltransferase (389 aa).

The protein belongs to the glycosyltransferase group 1 family.

The catalysed reaction is 2-deoxystreptamine + UDP-N-acetyl-alpha-D-glucosamine = 2'-N-acetylparomamine + UDP + H(+). The protein operates within antibiotic biosynthesis; butirosin biosynthesis. Its function is as follows. Glycosyltransferase involved in the biosynthesis of butirosin by mediating conversion of 2-deoxystreptamine (2-DOS) to 2'-N-acetylparomamine using UDP-alpha-D-glucosamine as sugar donor. This is 2-deoxystreptamine N-acetyl-D-glucosaminyltransferase (btrM) from Niallia circulans (Bacillus circulans).